We begin with the raw amino-acid sequence, 206 residues long: Small ribosomal subunit protein uS4 (206 aa).

Residues 1-16 (MTKRQESKYKIDRRMG) show a composition bias toward basic and acidic residues. The disordered stretch occupies residues 1–46 (MTKRQESKYKIDRRMGENIWGRPKSPVNRREYGPGQHGQRRKGKLS). Positions 94 to 154 (RRLDAVVYRA…EKSKQLAIVL (61 aa)) constitute an S4 RNA-binding domain.

It belongs to the universal ribosomal protein uS4 family. As to quaternary structure, part of the 30S ribosomal subunit. Contacts protein S5. The interaction surface between S4 and S5 is involved in control of translational fidelity.

One of the primary rRNA binding proteins, it binds directly to 16S rRNA where it nucleates assembly of the body of the 30S subunit. In terms of biological role, with S5 and S12 plays an important role in translational accuracy. This Parvibaculum lavamentivorans (strain DS-1 / DSM 13023 / NCIMB 13966) protein is Small ribosomal subunit protein uS4.